Reading from the N-terminus, the 310-residue chain is Retrotransposon Gag-like protein 4 (310 aa).

A CCHC-type zinc finger spans residues 278–295 (QLCLYCSQSGHFTRDCLA).

Involved in cognitive function in the brain, possibly via the noradrenergic system. In Homo sapiens (Human), this protein is Retrotransposon Gag-like protein 4.